A 249-amino-acid chain; its full sequence is tRNA pseudouridine synthase A (249 aa).

The active-site Nucleophile is aspartate 54. Tyrosine 111 is a substrate binding site.

It belongs to the tRNA pseudouridine synthase TruA family. In terms of assembly, homodimer.

The catalysed reaction is uridine(38/39/40) in tRNA = pseudouridine(38/39/40) in tRNA. In terms of biological role, formation of pseudouridine at positions 38, 39 and 40 in the anticodon stem and loop of transfer RNAs. This Mycoplasma capricolum subsp. capricolum (strain California kid / ATCC 27343 / NCTC 10154) protein is tRNA pseudouridine synthase A.